Reading from the N-terminus, the 700-residue chain is Polycomb protein suz12 (700 aa).

Disordered stretches follow at residues aspartate 215–lysine 250 and threonine 319–serine 376. Residues glycine 218–isoleucine 228 are compositionally biased toward polar residues. The C2H2-type zinc finger occupies leucine 405–histidine 428. Positions arginine 520 to phenylalanine 596 are VEFS-box. Residues leucine 651–proline 700 form a disordered region. Positions arginine 664 to glutamate 674 are enriched in polar residues.

It belongs to the VEFS (VRN2-EMF2-FIS2-SU(Z)12) family. Component of the prc2/eed-ezh2 complex.

Its subcellular location is the nucleus. Polycomb group (PcG) protein. Component of the prc2/eed-ezh2 complex, which methylates 'Lys-9' (H3K9me) and 'Lys-27' (H3K27me) of histone H3, leading to transcriptional repression of the affected target gene. The protein is Polycomb protein suz12 (suz12) of Xenopus tropicalis (Western clawed frog).